Consider the following 710-residue polypeptide: uncharacterized protein (710 aa).

2 coiled-coil regions span residues 273 to 298 (LYRQERKELKNTKQRYLKKKNEMEEG) and 477 to 528 (RYEK…VADT).

This is an uncharacterized protein from Coxiella burnetii (strain RSA 493 / Nine Mile phase I).